We begin with the raw amino-acid sequence, 152 residues long: CASP-like protein 5C3 (152 aa).

Over 1 to 17 the chain is Cytoplasmic; sequence MVEVPGSVGTTASLSLR. The helical transmembrane segment at 18–38 threads the bilayer; it reads LGQMVLAFGSLLFMTIGVRFY. The Extracellular portion of the chain corresponds to 39–42; it reads QFTA. The chain crosses the membrane as a helical span at residues 43 to 63; that stretch reads FCYLVTIMSLAIPWNLTLAMV. At 64 to 78 the chain is on the cytoplasmic side; it reads DIYCVILQQPFQKPR. The helical transmembrane segment at 79–99 threads the bilayer; sequence ILLAISIGDWVVSVLALASAS. At 100 to 128 the chain is on the extracellular side; it reads SAASVVDILRSNESSCPPTICNRYQFAAT. Asn-111 carries an N-linked (GlcNAc...) asparagine glycan. A helical transmembrane segment spans residues 129 to 149; sequence LAFLTWFLSLSSSLFNLWLLP. At 150–152 the chain is on the cytoplasmic side; sequence SLI.

This sequence belongs to the Casparian strip membrane proteins (CASP) family. In terms of assembly, homodimer and heterodimers. As to expression, expressed in the floral organ abscission zone and flower buds.

The protein resides in the cell membrane. This Arabidopsis thaliana (Mouse-ear cress) protein is CASP-like protein 5C3.